A 487-amino-acid chain; its full sequence is Glycogen synthase (487 aa).

An ADP-alpha-D-glucose-binding site is contributed by K20.

Belongs to the glycosyltransferase 1 family. Bacterial/plant glycogen synthase subfamily.

The catalysed reaction is [(1-&gt;4)-alpha-D-glucosyl](n) + ADP-alpha-D-glucose = [(1-&gt;4)-alpha-D-glucosyl](n+1) + ADP + H(+). It functions in the pathway glycan biosynthesis; glycogen biosynthesis. Synthesizes alpha-1,4-glucan chains using ADP-glucose. This chain is Glycogen synthase, found in Aliivibrio fischeri (strain ATCC 700601 / ES114) (Vibrio fischeri).